A 49-amino-acid polypeptide reads, in one-letter code: Small ribosomal subunit protein uS19c (49 aa).

It belongs to the universal ribosomal protein uS19 family.

The protein resides in the plastid. Its subcellular location is the chloroplast. Protein S19 forms a complex with S13 that binds strongly to the 16S ribosomal RNA. The chain is Small ribosomal subunit protein uS19c (rps19) from Sinapis alba (White mustard).